The sequence spans 199 residues: Holliday junction branch migration complex subunit RuvA (199 aa).

The segment at 1–65 (MIGWLHGQII…EDALLLYGFL (65 aa)) is domain I. Residues 66 to 144 (DKEERSLFRS…QFDGSVSDTF (79 aa)) are domain II. The interval 144–148 (FQKQA) is flexible linker. The interval 149–199 (GSTHSQQEAISALEALGYKPQEAWKVMNKIDNGNKSCEQLIREALQILSSR) is domain III.

It belongs to the RuvA family. As to quaternary structure, homotetramer. Forms an RuvA(8)-RuvB(12)-Holliday junction (HJ) complex. HJ DNA is sandwiched between 2 RuvA tetramers; dsDNA enters through RuvA and exits via RuvB. An RuvB hexamer assembles on each DNA strand where it exits the tetramer. Each RuvB hexamer is contacted by two RuvA subunits (via domain III) on 2 adjacent RuvB subunits; this complex drives branch migration. In the full resolvosome a probable DNA-RuvA(4)-RuvB(12)-RuvC(2) complex forms which resolves the HJ.

The protein resides in the cytoplasm. Its function is as follows. The RuvA-RuvB-RuvC complex processes Holliday junction (HJ) DNA during genetic recombination and DNA repair, while the RuvA-RuvB complex plays an important role in the rescue of blocked DNA replication forks via replication fork reversal (RFR). RuvA specifically binds to HJ cruciform DNA, conferring on it an open structure. The RuvB hexamer acts as an ATP-dependent pump, pulling dsDNA into and through the RuvAB complex. HJ branch migration allows RuvC to scan DNA until it finds its consensus sequence, where it cleaves and resolves the cruciform DNA. The polypeptide is Holliday junction branch migration complex subunit RuvA (Legionella pneumophila subsp. pneumophila (strain Philadelphia 1 / ATCC 33152 / DSM 7513)).